The chain runs to 264 residues: 3-methyl-2-oxobutanoate hydroxymethyltransferase (264 aa).

Mg(2+) is bound by residues Asp-45 and Asp-84. Residues 45-46 (DS), Asp-84, and Lys-112 contribute to the 3-methyl-2-oxobutanoate site. Glu-114 is a binding site for Mg(2+). Glu-181 serves as the catalytic Proton acceptor.

This sequence belongs to the PanB family. Homodecamer; pentamer of dimers. Requires Mg(2+) as cofactor.

Its subcellular location is the cytoplasm. The catalysed reaction is 3-methyl-2-oxobutanoate + (6R)-5,10-methylene-5,6,7,8-tetrahydrofolate + H2O = 2-dehydropantoate + (6S)-5,6,7,8-tetrahydrofolate. It functions in the pathway cofactor biosynthesis; (R)-pantothenate biosynthesis; (R)-pantoate from 3-methyl-2-oxobutanoate: step 1/2. In terms of biological role, catalyzes the reversible reaction in which hydroxymethyl group from 5,10-methylenetetrahydrofolate is transferred onto alpha-ketoisovalerate to form ketopantoate. The protein is 3-methyl-2-oxobutanoate hydroxymethyltransferase of Shewanella sp. (strain ANA-3).